The sequence spans 1070 residues: DNA-directed RNA polymerase subunit beta (1070 aa).

Belongs to the RNA polymerase beta chain family. As to quaternary structure, in plastids the minimal PEP RNA polymerase catalytic core is composed of four subunits: alpha, beta, beta', and beta''. When a (nuclear-encoded) sigma factor is associated with the core the holoenzyme is formed, which can initiate transcription.

Its subcellular location is the plastid. It localises to the chloroplast. The enzyme catalyses RNA(n) + a ribonucleoside 5'-triphosphate = RNA(n+1) + diphosphate. In terms of biological role, DNA-dependent RNA polymerase catalyzes the transcription of DNA into RNA using the four ribonucleoside triphosphates as substrates. This is DNA-directed RNA polymerase subunit beta from Nicotiana sylvestris (Wood tobacco).